Reading from the N-terminus, the 105-residue chain is Thioredoxin (105 aa).

The region spanning 2–105 (VKLIESKEAF…KLEASITEYA (104 aa)) is the Thioredoxin domain. At Lys-3 the chain carries N6-acetyllysine. Position 8 is an N6-succinyllysine (Lys-8). Residues Cys-32 and Cys-35 each act as nucleophile in the active site. Cys-32 and Cys-35 form a disulfide bridge. N6-acetyllysine is present on Lys-39. Residues Cys-62 and Cys-69 each carry the S-nitrosocysteine modification. Cys-73 carries the post-translational modification S-nitrosocysteine; alternate. The residue at position 94 (Lys-94) is an N6-acetyllysine; alternate. The residue at position 94 (Lys-94) is an N6-succinyllysine; alternate.

Belongs to the thioredoxin family. Homodimer; disulfide-linked. Interacts with TXNIP through the redox-active site. Interacts with MAP3K5 and CASP3. Interacts with APEX1; the interaction stimulates the FOS/JUN AP-1 DNA-binding activity in a redox-dependent manner. Post-translationally, in the fully reduced protein, both Cys-69 and Cys-73 are nitrosylated in response to nitric oxide (NO). When two disulfide bonds are present in the protein, only Cys-73 is nitrosylated. Cys-73 can serve as donor for nitrosylation of target proteins.

It localises to the nucleus. Its subcellular location is the cytoplasm. It is found in the secreted. Participates in various redox reactions through the reversible oxidation of its active center dithiol to a disulfide and catalyzes dithiol-disulfide exchange reactions. Plays a role in the reversible S-nitrosylation of cysteine residues in target proteins, and thereby contributes to the response to intracellular nitric oxide. Nitrosylates the active site Cys of CASP3 in response to nitric oxide (NO), and thereby inhibits caspase-3 activity. Induces the FOS/JUN AP-1 DNA binding activity in ionizing radiation (IR) cells through its oxidation/reduction status and stimulates AP-1 transcriptional activity. Its function is as follows. ADF augments the expression of the interleukin-2 receptor TAC (IL2R/P55). The protein is Thioredoxin (Txn) of Mus musculus (Mouse).